The primary structure comprises 599 residues: Kinesin light chain 2 (599 aa).

The stretch at 78–143 forms a coiled coil; it reads ILALSSHLGA…KQHLLFMSQI (66 aa). Positions 154–163 are enriched in basic and acidic residues; sequence EKGDVPKDSL. Positions 154-188 are disordered; it reads EKGDVPKDSLDDLFPNEDEQSPAPSPGGGDVAAQH. A phosphoserine mark is found at S174 and S178. TPR repeat units lie at residues 197 to 230, 239 to 272, 281 to 314, 323 to 356, and 365 to 398; these read LRTLHNLVIQYASQGRYEVAVPLCKQALEDLEKT, ATMLNILALVYRDQNKYKDAAHLLNDALAIREKT, AATLNNLAVLYGKRGKYKEAEPLCKRALEIREKV, AKQLSNLALLCQNQGKAEEVEYYYRRALEIYATR, and AKTKNNLASCYLKQGKYQDAETLYKEILTRAHEK. A Phosphoserine modification is found at S443. Residues 447-480 form a TPR 6 repeat; it reads NTTLRTLGALYRPEGKLEAAHTLEDCASRSRKQG. The segment at 492–541 is disordered; sequence LLKDGSGRGHRRGSRDVAGPQSESDLEESGPAAEWSGDGSGSLRRSGSFG. Phosphoserine occurs at positions 505 and 515. A compositionally biased stretch (low complexity) spans 532 to 541; it reads GSLRRSGSFG. Phosphoserine is present on residues S574, S575, and S582.

The protein belongs to the kinesin light chain family. As to quaternary structure, oligomeric complex composed of two heavy chains and two light chains. Interacts (via TPR repeats) with PLEKHM2.

The protein resides in the cytoplasm. The protein localises to the cytoskeleton. It localises to the lysosome membrane. In terms of biological role, kinesin is a microtubule-associated force-producing protein that plays a role in organelle transport. The light chain functions in coupling of cargo to the heavy chain or in the modulation of its ATPase activity. Through binding with PLEKHM2 and ARL8B, recruits kinesin-1 to lysosomes and hence direct lysosomes movement toward microtubule plus ends. The polypeptide is Kinesin light chain 2 (Mus musculus (Mouse)).